The sequence spans 220 residues: Protein GrpE (220 aa).

A disordered region spans residues 1-55 (MCGGDVQGQGVASGCDEALERADSLRASDPVPVESGEGSVPGEHSQELETGASEE).

This sequence belongs to the GrpE family. In terms of assembly, homodimer.

It is found in the cytoplasm. In terms of biological role, participates actively in the response to hyperosmotic and heat shock by preventing the aggregation of stress-denatured proteins, in association with DnaK and GrpE. It is the nucleotide exchange factor for DnaK and may function as a thermosensor. Unfolded proteins bind initially to DnaJ; upon interaction with the DnaJ-bound protein, DnaK hydrolyzes its bound ATP, resulting in the formation of a stable complex. GrpE releases ADP from DnaK; ATP binding to DnaK triggers the release of the substrate protein, thus completing the reaction cycle. Several rounds of ATP-dependent interactions between DnaJ, DnaK and GrpE are required for fully efficient folding. This is Protein GrpE from Treponema pallidum (strain Nichols).